The sequence spans 221 residues: 7-cyano-7-deazaguanine synthase (221 aa).

10-20 (LSGGLDSTTCM) lines the ATP pocket. Zn(2+) contacts are provided by C188, C196, C199, and C202.

This sequence belongs to the QueC family. As to quaternary structure, homodimer. Zn(2+) is required as a cofactor.

The enzyme catalyses 7-carboxy-7-deazaguanine + NH4(+) + ATP = 7-cyano-7-deazaguanine + ADP + phosphate + H2O + H(+). The protein operates within purine metabolism; 7-cyano-7-deazaguanine biosynthesis. In terms of biological role, catalyzes the ATP-dependent conversion of 7-carboxy-7-deazaguanine (CDG) to 7-cyano-7-deazaguanine (preQ(0)). In Oceanobacillus iheyensis (strain DSM 14371 / CIP 107618 / JCM 11309 / KCTC 3954 / HTE831), this protein is 7-cyano-7-deazaguanine synthase.